A 561-amino-acid polypeptide reads, in one-letter code: Putative transport protein YbjL (561 aa).

The next 5 helical transmembrane spans lie at 8 to 28 (LLNG…LCLG), 32 to 52 (LGSI…LLGQ), 66 to 86 (FMLF…SIFF), 94 to 114 (MLAL…GKLF), and 158 to 178 (NLSL…IVGA). 2 RCK C-terminal domains span residues 200-288 (RGLD…SFRN) and 292-373 (VFDR…RIGF). The next 5 helical transmembrane spans lie at 383-403 (LLAF…TFQF), 406-426 (FSFG…LGFM), 451-471 (VFMA…LGAI), 475-495 (MLIA…LFGA), and 540-560 (AIAN…WPGL).

The protein belongs to the AAE transporter (TC 2.A.81) family. YbjL subfamily.

It localises to the cell membrane. The polypeptide is Putative transport protein YbjL (Shigella boydii serotype 4 (strain Sb227)).